The primary structure comprises 31 residues: Cytochrome b6-f complex subunit 6 (31 aa).

A helical membrane pass occupies residues 4–26 (ITSYFGFLLAASTITPALLIGLS).

The protein belongs to the PetL family. As to quaternary structure, the 4 large subunits of the cytochrome b6-f complex are cytochrome b6, subunit IV (17 kDa polypeptide, PetD), cytochrome f and the Rieske protein, while the 4 small subunits are PetG, PetL, PetM and PetN. The complex functions as a dimer.

The protein localises to the plastid. It localises to the chloroplast thylakoid membrane. In terms of biological role, component of the cytochrome b6-f complex, which mediates electron transfer between photosystem II (PSII) and photosystem I (PSI), cyclic electron flow around PSI, and state transitions. PetL is important for photoautotrophic growth as well as for electron transfer efficiency and stability of the cytochrome b6-f complex. This Liriodendron tulipifera (Tuliptree) protein is Cytochrome b6-f complex subunit 6.